The primary structure comprises 1001 residues: Open rectifier potassium channel protein 1 (1001 aa).

Residues 1–6 (MSPNRW) lie on the Cytoplasmic side of the membrane. The helical transmembrane segment at 7 to 27 (ILLLIFYISYLMFGAAIYYHI) threads the bilayer. Residue asparagine 58 is glycosylated (N-linked (GlcNAc...) asparagine). The pore-forming intramembrane region spans 95 to 111 (AFFFAFTVCSTVGYGNI). A helical membrane pass occupies residues 120–140 (MIMIAYSVIGIPVNGILFAGL). Topologically, residues 141–170 (GEYFGRTFEAIYRRYKKYKMSTDMHYVPPQ) are cytoplasmic. A helical membrane pass occupies residues 171–191 (LGLITTVVIALIPGIALFLLL). An intramembrane region (pore-forming) is located at residues 208-224 (LYYSYVTTTTIGFGDYV). Residues 244 to 264 (IFVIVWFIFSLGYLVMIMTFI) traverse the membrane as a helical segment. Residues 265-1001 (TRGLQSKKLA…TGSSGAPAEK (737 aa)) are Cytoplasmic-facing. Phosphoserine is present on residues serine 332, serine 373, serine 562, and serine 565. The interval 591-668 (SQSYLRNGRG…QAPSARRGSM (78 aa)) is disordered. Serine 685, serine 691, and serine 715 each carry phosphoserine. 2 disordered regions span residues 768–795 (GGAA…EPPQ) and 830–1001 (SPTG…PAEK). A compositionally biased stretch (low complexity) spans 832-841 (TGGAATAPAA). Residues 855–873 (AANQSQITAGPSNAPTVQS) show a composition bias toward polar residues. The segment covering 911–926 (RRLSLRPSPLARELSP) has biased composition (low complexity). The segment covering 961-983 (RPSTSSTHSPLSRIVQISQAQRK) has biased composition (polar residues). Residues 984 to 1001 (SSMPSAAATGSSGAPAEK) show a composition bias toward low complexity.

The protein belongs to the two pore domain potassium channel (TC 1.A.1.8) family. In terms of tissue distribution, widespread expression in adult, strongest expression in muscle, brain and ovary. Also present at low levels in larva and embryo.

The protein localises to the membrane. Its function is as follows. Background potassium channel. Rectification is dependent on external potassium concentration. Acts as an outwardly rectifying channel but as external potassium levels increase, this is reversed. The sequence is that of Open rectifier potassium channel protein 1 (Ork1) from Drosophila melanogaster (Fruit fly).